The following is a 476-amino-acid chain: Protein transport protein Sec61 subunit alpha isoform B (476 aa).

Topologically, residues 2-33 are cytoplasmic; sequence GIKFLEVIKPFCAVLPEIQKPERKIQFREKVL. A helical membrane pass occupies residues 34 to 53; the sequence is WTAITLFIFLVCCQIPLFGI. Residues 54 to 76 are Lumenal-facing; the sequence is MSSDSADPFYWMRVILASNRGTL. Residues 77-96 form a helical membrane-spanning segment; it reads MELGISPIVTSGLIMQLLAG. The Cytoplasmic portion of the chain corresponds to 97-117; that stretch reads AKIIEVGDTPKDRALFNGAQK. Residues 118 to 138 form a helical membrane-spanning segment; sequence LFGMIITIGQAIVYVMTGMYG. Residues 139–144 lie on the Lumenal side of the membrane; sequence DPSDMG. Residues 145–165 form a helical membrane-spanning segment; that stretch reads AGICLLIIIQLFVAGLIVLLL. The Cytoplasmic portion of the chain corresponds to 166 to 172; it reads DELLQKG. The helical transmembrane segment at 173-193 threads the bilayer; that stretch reads YGLGSGISLFIATNICETIVW. The Lumenal portion of the chain corresponds to 194-240; sequence KAFSPTTVNTGRGTEFEGAIIALFHLLATRTDKVRALREAFYRQNLP. The helical transmembrane segment at 241 to 261 threads the bilayer; sequence NLMNLLATVFVFGVVIYFQGF. The Cytoplasmic portion of the chain corresponds to 262–288; it reads RVDLPIKSARYRGQYNTYPIKLFYTSN. A helical transmembrane segment spans residues 289–309; sequence IPIILQSALVSNLYVISQMLS. At 310–354 the chain is on the lumenal side; that stretch reads TRFSGNFLVNLLGTWSDTSSGGPARAYPVGGLCYYFSPPESFGSV. The helical transmembrane segment at 355 to 375 threads the bilayer; sequence LDDPIHAAIYICFMLGSCAFF. The Cytoplasmic portion of the chain corresponds to 376 to 420; sequence SKTWIEVSGSSAKDVAKQLKEQQMVMRGHRETSMVHELNRYIPTA. The chain crosses the membrane as a helical span at residues 421–441; it reads AAFGGLCIGGLSVMADFLGAI. Residues 442-445 lie on the Lumenal side of the membrane; the sequence is GSGT. Residues 446-462 form a helical membrane-spanning segment; sequence GILLAVTIIYQYFEIFV. At 463–476 the chain is on the cytoplasmic side; it reads KEQSEMGSMGALLF.

Belongs to the SecY/SEC61-alpha family. The SEC61 channel-forming translocon complex consists of channel-forming core components SEC61A1, SEC61B and SEC61G and different auxiliary components such as SEC62 and SEC63.

The protein resides in the endoplasmic reticulum membrane. Functionally, component of SEC61 channel-forming translocon complex that mediates transport of signal peptide-containing precursor polypeptides across the endoplasmic reticulum (ER). Forms a ribosome receptor and a gated pore in the ER membrane, both functions required for cotranslational translocation of nascent polypeptides. This Oncorhynchus mykiss (Rainbow trout) protein is Protein transport protein Sec61 subunit alpha isoform B (sec61ab).